Reading from the N-terminus, the 405-residue chain is Multifunctional CCA protein (405 aa).

The ATP site is built by G8 and R11. 2 residues coordinate CTP: G8 and R11. Mg(2+) is bound by residues D21 and D23. 3 residues coordinate ATP: R91, R137, and R140. Positions 91, 137, and 140 each coordinate CTP. One can recognise an HD domain in the interval 225–326 (TGVHAMLVLD…LRLLRECDAL (102 aa)).

It belongs to the tRNA nucleotidyltransferase/poly(A) polymerase family. Bacterial CCA-adding enzyme type 1 subfamily. Monomer. Can also form homodimers and oligomers. It depends on Mg(2+) as a cofactor. Ni(2+) is required as a cofactor.

The catalysed reaction is a tRNA precursor + 2 CTP + ATP = a tRNA with a 3' CCA end + 3 diphosphate. It carries out the reaction a tRNA with a 3' CCA end + 2 CTP + ATP = a tRNA with a 3' CCACCA end + 3 diphosphate. Catalyzes the addition and repair of the essential 3'-terminal CCA sequence in tRNAs without using a nucleic acid template. Adds these three nucleotides in the order of C, C, and A to the tRNA nucleotide-73, using CTP and ATP as substrates and producing inorganic pyrophosphate. tRNA 3'-terminal CCA addition is required both for tRNA processing and repair. Also involved in tRNA surveillance by mediating tandem CCA addition to generate a CCACCA at the 3' terminus of unstable tRNAs. While stable tRNAs receive only 3'-terminal CCA, unstable tRNAs are marked with CCACCA and rapidly degraded. This chain is Multifunctional CCA protein, found in Laribacter hongkongensis (strain HLHK9).